The primary structure comprises 87 residues: Acyl carrier protein TtuC (87 aa).

In terms of domain architecture, Carrier spans 11–87 (ITAEDVQQWL…HALSQFIAAK (77 aa)). Position 48 is an O-(pantetheine 4'-phosphoryl)serine (S48).

Requires pantetheine 4'-phosphate as cofactor.

In terms of biological role, carrier protein likely involved in the biosynthesis of a polyyne metabolite. Accepts as substrate the activated form of decanoic acid from TtuA. The polypeptide is Acyl carrier protein TtuC (Teredinibacter turnerae (strain ATCC 39867 / T7901)).